A 388-amino-acid chain; its full sequence is Alanine racemase (388 aa).

Lysine 40 serves as the catalytic Proton acceptor; specific for D-alanine. An N6-(pyridoxal phosphate)lysine modification is found at lysine 40. Residue arginine 137 participates in substrate binding. The Proton acceptor; specific for L-alanine role is filled by tyrosine 269. Methionine 318 lines the substrate pocket.

It belongs to the alanine racemase family. Pyridoxal 5'-phosphate serves as cofactor.

It catalyses the reaction L-alanine = D-alanine. It participates in amino-acid biosynthesis; D-alanine biosynthesis; D-alanine from L-alanine: step 1/1. Functionally, catalyzes the interconversion of L-alanine and D-alanine. May also act on other amino acids. In Halalkalibacterium halodurans (strain ATCC BAA-125 / DSM 18197 / FERM 7344 / JCM 9153 / C-125) (Bacillus halodurans), this protein is Alanine racemase (alr).